The sequence spans 102 residues: Cytochrome c oxidase subunit 6a, mitochondrial (102 aa).

The N-terminal 36 residues, 1 to 36 (MATAIVRSALSRAVTRAAPKTSVAPKRNFSSSAGHD), are a transit peptide targeting the mitochondrion.

Belongs to the cytochrome c oxidase subunit 6A (TC 3.D.4.11) family.

Its subcellular location is the mitochondrion inner membrane. In terms of biological role, this protein is one of the nuclear-coded polypeptide chains of cytochrome c oxidase, the terminal oxidase in mitochondrial electron transport. This chain is Cytochrome c oxidase subunit 6a, mitochondrial (COX6A), found in Arabidopsis thaliana (Mouse-ear cress).